The following is a 368-amino-acid chain: tRNA/tmRNA (uracil-C(5))-methyltransferase (368 aa).

5 residues coordinate S-adenosyl-L-methionine: Gln-192, Tyr-220, Asn-225, Glu-241, and Asp-301. The Nucleophile role is filled by Cys-326. Glu-360 functions as the Proton acceptor in the catalytic mechanism.

This sequence belongs to the class I-like SAM-binding methyltransferase superfamily. RNA M5U methyltransferase family. TrmA subfamily.

It carries out the reaction uridine(54) in tRNA + S-adenosyl-L-methionine = 5-methyluridine(54) in tRNA + S-adenosyl-L-homocysteine + H(+). The enzyme catalyses uridine(341) in tmRNA + S-adenosyl-L-methionine = 5-methyluridine(341) in tmRNA + S-adenosyl-L-homocysteine + H(+). Functionally, dual-specificity methyltransferase that catalyzes the formation of 5-methyluridine at position 54 (m5U54) in all tRNAs, and that of position 341 (m5U341) in tmRNA (transfer-mRNA). The polypeptide is tRNA/tmRNA (uracil-C(5))-methyltransferase (Actinobacillus pleuropneumoniae serotype 3 (strain JL03)).